A 476-amino-acid polypeptide reads, in one-letter code: Cysteine--tRNA ligase (476 aa).

Residue cysteine 36 participates in Zn(2+) binding. A 'HIGH' region motif is present at residues 38 to 48 (PTVYDYAHIGN). Residues cysteine 221, histidine 246, and glutamate 250 each contribute to the Zn(2+) site. The 'KMSKS' region motif lies at 278–282 (KMSKS). Lysine 281 provides a ligand contact to ATP.

It belongs to the class-I aminoacyl-tRNA synthetase family. As to quaternary structure, monomer. It depends on Zn(2+) as a cofactor.

Its subcellular location is the cytoplasm. The catalysed reaction is tRNA(Cys) + L-cysteine + ATP = L-cysteinyl-tRNA(Cys) + AMP + diphosphate. This chain is Cysteine--tRNA ligase, found in Chlamydia caviae (strain ATCC VR-813 / DSM 19441 / 03DC25 / GPIC) (Chlamydophila caviae).